The chain runs to 214 residues: MKFFLDTANVAAIKAINELGVVDGVTTNPTIISREGRDFETVIKEICDIVDGPISAEVTGLTADAMVEEARSIAKWHDNVVVKIPMTTEGLKATNILSKEGIKTNVTLIFTVSQGLMAMKAGATYISPFIGRLEDIGTDAYQLISDLREIIDLYDFQTEIIAASIRTTAHVEAVAKLGAHIATIPDPLFAKMTQHPLTTNGLKTFMEDWASFKK.

Lys83 serves as the catalytic Schiff-base intermediate with substrate.

Belongs to the transaldolase family. Type 3B subfamily.

It localises to the cytoplasm. The catalysed reaction is D-sedoheptulose 7-phosphate + D-glyceraldehyde 3-phosphate = D-erythrose 4-phosphate + beta-D-fructose 6-phosphate. It participates in carbohydrate degradation; pentose phosphate pathway; D-glyceraldehyde 3-phosphate and beta-D-fructose 6-phosphate from D-ribose 5-phosphate and D-xylulose 5-phosphate (non-oxidative stage): step 2/3. In terms of biological role, transaldolase is important for the balance of metabolites in the pentose-phosphate pathway. In Streptococcus pyogenes serotype M2 (strain MGAS10270), this protein is Probable transaldolase.